Consider the following 403-residue polypeptide: Argininosuccinate synthase (403 aa).

10-18 (AYSGGLDTS) contributes to the ATP binding site. Position 87 (Tyr87) interacts with L-citrulline. An ATP-binding site is contributed by Gly117. L-aspartate-binding residues include Thr119, Asn123, and Asp124. Asn123 contributes to the L-citrulline binding site. Residues Arg127, Ser175, Ser184, Glu260, and Tyr272 each contribute to the L-citrulline site.

The protein belongs to the argininosuccinate synthase family. Type 1 subfamily. Homotetramer.

Its subcellular location is the cytoplasm. It catalyses the reaction L-citrulline + L-aspartate + ATP = 2-(N(omega)-L-arginino)succinate + AMP + diphosphate + H(+). It participates in amino-acid biosynthesis; L-arginine biosynthesis; L-arginine from L-ornithine and carbamoyl phosphate: step 2/3. This chain is Argininosuccinate synthase, found in Bacillus pumilus (strain SAFR-032).